We begin with the raw amino-acid sequence, 443 residues long: FAD-dependent monooxygenase orf3 (443 aa).

The chain crosses the membrane as a helical span at residues 5 to 25 (SIEVAIIGAGITGITLALGLL). FAD contacts are provided by glutamate 35 and glycine 48. 2 N-linked (GlcNAc...) asparagine glycosylation sites follow: asparagine 75 and asparagine 87. Arginine 116 contacts FAD. Arginine 199 is a catalytic residue. Residues aspartate 315 and alanine 328 each coordinate FAD.

Belongs to the paxM FAD-dependent monooxygenase family. FAD serves as cofactor.

It localises to the membrane. Its pathway is secondary metabolite biosynthesis. FAD-dependent monooxygenase; part of the gene cluster that mediates the biosynthesis of nigerpyrone and its derivatives carbonarone A and pestalamide A. The biosynthesis pathway begins with the polyketide assembly by epaA to form phenylacetyl triketide precursor from successive condensation of two malonyl-CoA, presumably with one phenylacetyl-CoA starter unit produced by the phenylacetyl-CoA ligase epaB. For the nigerpyrone biosynthesis, the reactive polyketide chain is released as an aldehyde through the R-domain. A nonenzymatic cyclization and dehydration may create nigerpyrone. For the biosynthesis of carbonarone A and pestalamide A, an extra methyl group is added through the C-methyltransferase domain. Several further steps involving the dehydrogenase orf1, the cytochrome P450 monooxygenase orf2 and the FAD-dependent monooxygenase orf3 are required to form a carbonarone A precursor which is converted to carbonarone A via cyclization. The O-acetyltransferase epaC could catalyze the transfer of 2-methylsuccinyl-CoA, a common intermediate in the ethylmalonyl-CoA pathway, to generate the final product pestalamide A. The chain is FAD-dependent monooxygenase orf3 from Aspergillus niger (strain ATCC MYA-4892 / CBS 513.88 / FGSC A1513).